Here is a 211-residue protein sequence, read N- to C-terminus: N-(5'-phosphoribosyl)anthranilate isomerase (211 aa).

The protein belongs to the TrpF family.

The catalysed reaction is N-(5-phospho-beta-D-ribosyl)anthranilate = 1-(2-carboxyphenylamino)-1-deoxy-D-ribulose 5-phosphate. It functions in the pathway amino-acid biosynthesis; L-tryptophan biosynthesis; L-tryptophan from chorismate: step 3/5. In Methanococcus maripaludis (strain DSM 14266 / JCM 13030 / NBRC 101832 / S2 / LL), this protein is N-(5'-phosphoribosyl)anthranilate isomerase.